Consider the following 622-residue polypeptide: Basic helix-loop-helix ARNT-like protein 2 (622 aa).

Over residues 1–10 (MAEAGVGSAE) the composition is skewed to low complexity. Disordered stretches follow at residues 1-29 (MAEAGVGSAEGAEEERRAVEENFPVDGNS) and 41-86 (PITK…EDEE). A compositionally biased stretch (polar residues) spans 45–54 (PATTSFNNSV). Acidic residues predominate over residues 67–76 (DNQDTVEVDG). The segment covering 77 to 86 (DPQKRNEDEE) has biased composition (basic and acidic residues). One can recognise a bHLH domain in the interval 92–145 (DFREAHSQTEKRRRDKMNNLIEELSAMIPQCNPMARKLDKLTVLRMAVQHLKSL). PAS domains lie at 163-235 (KDDE…DVSP) and 342-412 (VPQK…LQNK). The 44-residue stretch at 417–460 (TNSYKFRAKDGSFITLKSQWFSFMNPWTKELEYIVSNNTVVLGH) folds into the PAC domain.

In terms of assembly, component of the circadian core oscillator, which includes the CRY proteins, CLOCK, or NPAS2, BMAL1 or BMAL2, CSNK1D and/or CSNK1E, TIMELESS and the PER proteins. Interacts directly with CLOCK to form the BMAL2-CLOCK transactivator. Can form heterodimers or homodimers which interact directly with CLOCK to form the transcription activator. In terms of tissue distribution, expressed in the pineal gland.

Its subcellular location is the nucleus. Functionally, transcriptional activator which forms a core component of the circadian clock. The circadian clock, an internal time-keeping system, regulates various physiological processes through the generation of approximately 24 hour circadian rhythms in gene expression, which are translated into rhythms in metabolism and behavior. It is derived from the Latin roots 'circa' (about) and 'diem' (day) and acts as an important regulator of a wide array of physiological functions including metabolism, sleep, body temperature, blood pressure, endocrine, immune, cardiovascular, and renal function. Consists of two major components: the central clock, residing in the suprachiasmatic nucleus (SCN) of the brain, and the peripheral clocks that are present in nearly every tissue and organ system. Both the central and peripheral clocks can be reset by environmental cues, also known as Zeitgebers (German for 'timegivers'). The predominant Zeitgeber for the central clock is light, which is sensed by retina and signals directly to the SCN. The central clock entrains the peripheral clocks through neuronal and hormonal signals, body temperature and feeding-related cues, aligning all clocks with the external light/dark cycle. Circadian rhythms allow an organism to achieve temporal homeostasis with its environment at the molecular level by regulating gene expression to create a peak of protein expression once every 24 hours to control when a particular physiological process is most active with respect to the solar day. Transcription and translation of core clock components (CLOCK, NPAS2, BMAL1, BMAL2, PER1, PER2, PER3, CRY1 and CRY2) plays a critical role in rhythm generation, whereas delays imposed by post-translational modifications (PTMs) are important for determining the period (tau) of the rhythms (tau refers to the period of a rhythm and is the length, in time, of one complete cycle). A diurnal rhythm is synchronized with the day/night cycle, while the ultradian and infradian rhythms have a period shorter and longer than 24 hours, respectively. Disruptions in the circadian rhythms contribute to the pathology of cardiovascular diseases, cancer, metabolic syndromes and aging. A transcription/translation feedback loop (TTFL) forms the core of the molecular circadian clock mechanism. Transcription factors, CLOCK or NPAS2 and BMAL1 or BMAL2, form the positive limb of the feedback loop, act in the form of a heterodimer and activate the transcription of core clock genes and clock-controlled genes (involved in key metabolic processes), harboring E-box elements (5'-CACGTG-3') within their promoters. The core clock genes: PER1/2/3 and CRY1/2 which are transcriptional repressors form the negative limb of the feedback loop and interact with the CLOCK|NPAS2-BMAL1|BMAL2 heterodimer inhibiting its activity and thereby negatively regulating their own expression. This heterodimer also activates nuclear receptors NR1D1/2 and RORA/B/G, which form a second feedback loop and which activate and repress BMAL1 transcription, respectively. The preferred binding motif for the CLOCK-BMAL1 heterodimer is 5'-CACGTGA-3', which contains a flanking adenine nucleotide at the 3-prime end of the canonical 6-nucleotide E-box sequence. CLOCK specifically binds to the half-site 5'-CAC-3', while BMAL1 binds to the half-site 5'-GTGA-3'. In Gallus gallus (Chicken), this protein is Basic helix-loop-helix ARNT-like protein 2 (BMAL2).